The primary structure comprises 150 residues: FAD synthase (150 aa).

ATP-binding positions include 8–9 (AF), 13–16 (HPGH), Asp95, and His122.

It belongs to the archaeal FAD synthase family. Homodimer. A divalent metal cation is required as a cofactor.

It carries out the reaction FMN + ATP + H(+) = FAD + diphosphate. It participates in cofactor biosynthesis; FAD biosynthesis; FAD from FMN: step 1/1. In terms of biological role, catalyzes the transfer of the AMP portion of ATP to flavin mononucleotide (FMN) to produce flavin adenine dinucleotide (FAD) coenzyme. The protein is FAD synthase of Methanobrevibacter ruminantium (strain ATCC 35063 / DSM 1093 / JCM 13430 / OCM 146 / M1) (Methanobacterium ruminantium).